Here is a 1169-residue protein sequence, read N- to C-terminus: Pesticidal crystal protein Cry1Gb (1169 aa).

It belongs to the delta endotoxin family.

Functionally, promotes colloidosmotic lysis by binding to the midgut epithelial cells of lepidopteran larvae. Toxic to Pieris rapae. This chain is Pesticidal crystal protein Cry1Gb (cry1Gb), found in Bacillus thuringiensis subsp. wuhanensis.